Consider the following 447-residue polypeptide: Ribosomal protein uS12 methylthiotransferase RimO (447 aa).

Residues 15–125 (PRVGFVSLGC…VMQAIHRHLP (111 aa)) form the MTTase N-terminal domain. Residues C24, C60, C89, C156, C160, and C163 each contribute to the [4Fe-4S] cluster site. The 238-residue stretch at 142-379 (LTPKHYAYLK…MQWQEEISKK (238 aa)) folds into the Radical SAM core domain. In terms of domain architecture, TRAM spans 379–447 (KRLAGKKGRI…GIHDLWAKKI (69 aa)).

Belongs to the methylthiotransferase family. RimO subfamily. It depends on [4Fe-4S] cluster as a cofactor.

It is found in the cytoplasm. It catalyses the reaction L-aspartate(89)-[ribosomal protein uS12]-hydrogen + (sulfur carrier)-SH + AH2 + 2 S-adenosyl-L-methionine = 3-methylsulfanyl-L-aspartate(89)-[ribosomal protein uS12]-hydrogen + (sulfur carrier)-H + 5'-deoxyadenosine + L-methionine + A + S-adenosyl-L-homocysteine + 2 H(+). In terms of biological role, catalyzes the methylthiolation of an aspartic acid residue of ribosomal protein uS12. The polypeptide is Ribosomal protein uS12 methylthiotransferase RimO (Nitrosomonas europaea (strain ATCC 19718 / CIP 103999 / KCTC 2705 / NBRC 14298)).